We begin with the raw amino-acid sequence, 222 residues long: Arginine ABC transporter permease protein ArtM (222 aa).

Topologically, residues 1 to 15 (MFEYLPELMKGLHTS) are periplasmic. The 197-residue stretch at 12–208 (LHTSLTLTVA…VVNGLLTLMM (197 aa)) folds into the ABC transmembrane type-1 domain. Residues 16-36 (LTLTVASLIVALILALIFTII) traverse the membrane as a helical segment. At 37–49 (LTLKTPVLVWLVR) the chain is on the cytoplasmic side. The helical transmembrane segment at 50–70 (GYITLFTGTPLLVQIFLIYYG) threads the bilayer. Residues 71–79 (PGQFPTLQE) are Periplasmic-facing. A helical transmembrane segment spans residues 80-100 (YPALWHLLSEPWLCALIALSL). Topologically, residues 101 to 154 (NSAAYTTQLFYGAIRAIPEGQWQSCSALGMSKKDTLAILLPYAFKRSLSSYSNE) are cytoplasmic. A helical transmembrane segment spans residues 155 to 175 (VVLVFKSTSLAYTITLMEVMG). At 176–186 (YSQLLYGRTYD) the chain is on the periplasmic side. A helical transmembrane segment spans residues 187-207 (VMVFGAAGIIYLVVNGLLTLM). Topologically, residues 208-222 (MRLIERKALAFERRN) are cytoplasmic.

Belongs to the binding-protein-dependent transport system permease family. HisMQ subfamily. As to quaternary structure, the complex is composed of two ATP-binding proteins (ArtP), two transmembrane proteins (ArtM and ArtQ) and two solute-binding proteins (ArtJ and ArtI).

It localises to the cell inner membrane. Functionally, part of the ABC transporter complex ArtPIQMJ involved in arginine transport. Probably responsible for the translocation of the substrate across the membrane. The polypeptide is Arginine ABC transporter permease protein ArtM (artM) (Escherichia coli (strain K12)).